We begin with the raw amino-acid sequence, 422 residues long: MNSLPPSTSAVSSPVSSVDSPLSAVSSSIGSPGVPGTPSIGYGPISNSQINSSMSVSRLHAVSSSDDVKPPFGLKSVSGSGPMLSQKRMCAICGDRSSGKHYGVYSCEGCKGFFKRTVRKDLSYTCRDNKECLVDKRQRNRCQYCRYQKCLAMGMKREAVQEERQKNKERDGDYECSSSANEEMPVEKILEAETAVEHRTDLHSDATGSPNDPVTNICQAADKQLFTLVEWAKRVPHFSDVPLDDQVILLRAGWNELLIAAFSHRSISVKDEILLATGLHVPKESTHNLGVEAFFDRESSHSAEVGALFDRVLTELVCKMRDMQMDKTELGCLRAIVLFNPDAKGLTSSSEVELLREKVYASLESYCKQKYPDQQGRFAKLLLRLPALRSIGLKCLEHLFFFKLIGNTPIDTFLMEMLESPH.

The tract at residues 1–89 (MNSLPPSTSA…SGPMLSQKRM (89 aa)) is modulating. 2 NR C4-type zinc fingers span residues 90-110 (CAIC…CEGC) and 126-150 (CRDN…YQKC). The nuclear receptor DNA-binding region spans 90-155 (CAICGDRSSG…RYQKCLAMGM (66 aa)). Positions 156 to 178 (KREAVQEERQKNKERDGDYECSS) are hinge. Residues 161-173 (QEERQKNKERDGD) show a composition bias toward basic and acidic residues. Residues 161–182 (QEERQKNKERDGDYECSSSANE) are disordered. The NR LBD domain maps to 181–421 (NEEMPVEKIL…TFLMEMLESP (241 aa)).

The protein belongs to the nuclear hormone receptor family. NR2 subfamily. Homodimer. Heterodimer; with a rar molecule. Binds DNA preferentially as a rar/rxr heterodimer. Heterodimerizes with rarga. Shows uniform expression from the blastula to mid-gastrula stages. At 12 hours post-fertilization (hpf), expressed ubiquitously but more weakly. At 24 hpf, restricted to the ventral diencephalon, pharangeal endoderm and trunk and tail mesoderm; mesoderm expression is in medial cells of each somite along the dorsoventral axis, forming stripes. At 48 hpf, expressed in forebrain, eye, midbrain and anterior hindbrain.

Its subcellular location is the nucleus. Its function is as follows. Receptor for retinoic acid. Retinoic acid receptors bind as heterodimers to their target response elements in response to their ligands, all-trans or 9-cis retinoic acid, and regulate gene expression in various biological processes. The rar/rxr heterodimers bind to the retinoic acid response elements (RARE) composed of tandem 5'-AGGTCA-3' sites known as DR1-DR5. The high affinity ligand for rxrs is 9-cis retinoic acid. This chain is Retinoic acid receptor RXR-beta-B (rxrbb), found in Danio rerio (Zebrafish).